The following is a 103-amino-acid chain: Small ribosomal subunit protein uS10 (103 aa).

The protein belongs to the universal ribosomal protein uS10 family. In terms of assembly, part of the 30S ribosomal subunit.

Functionally, involved in the binding of tRNA to the ribosomes. This is Small ribosomal subunit protein uS10 from Aliivibrio fischeri (strain ATCC 700601 / ES114) (Vibrio fischeri).